Reading from the N-terminus, the 521-residue chain is UPF0053 protein BU323 (521 aa).

The next 7 helical transmembrane spans lie at 13–33 (LLTLVILEVVLGIDNLIFVAI), 49–69 (IGLGLALVMRLALLSLISWIV), 80–100 (FFSLSIRDIILLFGGFFLLFK), 125–145 (FWAVVIQIVVLDAVFSLDAII), 150–170 (MVNQLLIMMIAVILATFLMLL), 185–205 (VVVLCLSFLLMIGFSLVTEAL), and 207–227 (FCIPKGYLYAAIGFSILIEIF). CBS domains are found at residues 311-370 (MTPR…KIDA) and 374-434 (SSKI…DADE).

Belongs to the UPF0053 family.

The protein resides in the cell membrane. The chain is UPF0053 protein BU323 from Buchnera aphidicola subsp. Acyrthosiphon pisum (strain APS) (Acyrthosiphon pisum symbiotic bacterium).